Reading from the N-terminus, the 389-residue chain is Smad nuclear interacting protein 1 (389 aa).

Residues 1–10 show a composition bias toward basic and acidic residues; the sequence is MKAGKSERER. Residues 1 to 212 are disordered; that stretch reads MKAGKSERER…GNKNKEVPVK (212 aa). Position 18 is a phosphoserine (Ser-18). Residue Lys-28 forms a Glycyl lysine isopeptide (Lys-Gly) (interchain with G-Cter in SUMO); alternate linkage. Lys-28 is covalently cross-linked (Glycyl lysine isopeptide (Lys-Gly) (interchain with G-Cter in SUMO1); alternate). A Glycyl lysine isopeptide (Lys-Gly) (interchain with G-Cter in SUMO2); alternate cross-link involves residue Lys-28. Positions 28 to 43 are enriched in basic and acidic residues; that stretch reads KQERLSPEPVAHRRPD. 2 positions are modified to phosphoserine: Ser-33 and Ser-48. Over residues 54–72 the composition is skewed to low complexity; the sequence is AESGSAGHRGSRARGASRS. Residues 73 to 95 are compositionally biased toward basic residues; the sequence is PAKKKSKSSGRRSKSPRTKRSRS. A Phosphoserine modification is found at Ser-95. 2 stretches are compositionally biased toward basic and acidic residues: residues 103 to 138 and 147 to 163; these read VKQEREDHPRRGREDRQHRELSEQEHRRARNSERDR and RSSDERPVSGQGRDRDS. Lys-104 is covalently cross-linked (Glycyl lysine isopeptide (Lys-Gly) (interchain with G-Cter in SUMO2)). Ser-149 is subject to Phosphoserine. A coiled-coil region spans residues 166–197; that stretch reads LQAQEEERDFNNARRREHRQQNESAGAEAQEV. A Glycyl lysine isopeptide (Lys-Gly) (interchain with G-Cter in SUMO2) cross-link involves residue Lys-214. An FHA domain is found at 272–335; that stretch reads YLLGRHRRIA…NGTFLNNKRI (64 aa). The segment covering 363-373 has biased composition (basic and acidic residues); it reads ESSDTSELDRK. Residues 363–389 form a disordered region; the sequence is ESSDTSELDRKEDEDEEEEEEMVSDSS. The segment covering 374–389 has biased composition (acidic residues); it reads EDEDEEEEEEMVSDSS. Position 386 is a phosphoserine (Ser-386).

As to quaternary structure, component of activated spliceosome complexes. Component of the minor spliceosome, which splices U12-type introns. Binds SMAD4 and CREBBP/EP300. Binds the SMAD1/OAZ1/PSMB4 complex. Interacts with DROSHA and SMARCA4. Component of the SNARP complex which consists at least of SNIP1, SNW1, THRAP3, BCLAF1 and PNN. Post-translationally, degraded by the proteasome upon binding to the SMAD1/OAZ1/PSMB4 complex.

The protein localises to the nucleus. In terms of biological role, required for pre-mRNA splicing as component of the spliceosome. As a component of the minor spliceosome, involved in the splicing of U12-type introns in pre-mRNAs. Down-regulates NF-kappa-B signaling by competing with RELA for CREBBP/EP300 binding. Involved in the microRNA (miRNA) biogenesis. May be involved in cyclin-D1/CCND1 mRNA stability through the SNARP complex which associates with both the 3'end of the CCND1 gene and its mRNA. This is Smad nuclear interacting protein 1 (Snip1) from Rattus norvegicus (Rat).